The sequence spans 212 residues: 2,3-bisphosphoglycerate-dependent phosphoglycerate mutase (212 aa).

Substrate is bound by residues R9–N16, T22–G23, R61, E88–Y91, K99, R115–R116, and G159–N160. The active-site Tele-phosphohistidine intermediate is the H10. E88 (proton donor/acceptor) is an active-site residue.

It belongs to the phosphoglycerate mutase family. BPG-dependent PGAM subfamily. In terms of assembly, homodimer.

It catalyses the reaction (2R)-2-phosphoglycerate = (2R)-3-phosphoglycerate. It functions in the pathway carbohydrate degradation; glycolysis; pyruvate from D-glyceraldehyde 3-phosphate: step 3/5. Catalyzes the interconversion of 2-phosphoglycerate and 3-phosphoglycerate. The protein is 2,3-bisphosphoglycerate-dependent phosphoglycerate mutase of Methylobacterium radiotolerans (strain ATCC 27329 / DSM 1819 / JCM 2831 / NBRC 15690 / NCIMB 10815 / 0-1).